A 298-amino-acid chain; its full sequence is Homoserine kinase (298 aa).

An ATP-binding site is contributed by 85–95 (PMGGLGSSAAS).

This sequence belongs to the GHMP kinase family. Homoserine kinase subfamily.

The protein resides in the cytoplasm. The enzyme catalyses L-homoserine + ATP = O-phospho-L-homoserine + ADP + H(+). Its pathway is amino-acid biosynthesis; L-threonine biosynthesis; L-threonine from L-aspartate: step 4/5. In terms of biological role, catalyzes the ATP-dependent phosphorylation of L-homoserine to L-homoserine phosphate. In Methanopyrus kandleri (strain AV19 / DSM 6324 / JCM 9639 / NBRC 100938), this protein is Homoserine kinase.